Reading from the N-terminus, the 258-residue chain is Proliferating cell nuclear antigen (258 aa).

A DNA-binding region spans residues 61-80 (RCDHPVTLGMDLTSLSKILR). A Glycyl lysine isopeptide (Lys-Gly) (interchain with G-Cter in SUMO) cross-link involves residue Lys-127. Lys-164 participates in a covalent cross-link: Glycyl lysine isopeptide (Lys-Gly) (interchain with G-Cter in SUMO); alternate. A Glycyl lysine isopeptide (Lys-Gly) (interchain with G-Cter in ubiquitin); alternate cross-link involves residue Lys-164.

Belongs to the PCNA family. Homotrimer. Interacts with RAD30. Interacts with MCM10. Interacts with UBP10. In terms of processing, sumoylated on Lys-164, and to a lesser extent on Lys-127 by the UBC9/SIZ1 complex during S-phase; which impairs ubiquitination and function in DNA repair. Monoubiquitinated on Lys-164 by the UBC2/RAD18 complex upon DNA damage, and then polyubiquitinated through 'Lys-63'-linkage by UBC13/MMS2. Ubiquitination is required for UBC2-mediated DNA repair. Post-translationally, lys-164 is deubiquitinated by UBP10.

The protein localises to the nucleus. Its function is as follows. This protein is an auxiliary protein of DNA polymerase delta and is involved in the control of eukaryotic DNA replication by increasing the polymerase's processibility during elongation of the leading strand. Involved in DNA repair. The polypeptide is Proliferating cell nuclear antigen (POL30) (Saccharomyces cerevisiae (strain ATCC 204508 / S288c) (Baker's yeast)).